Consider the following 247-residue polypeptide: uncharacterized protein (247 aa).

Residue 4-28 (ALVTGGSRGIGRATALLLAQEGYTV) coordinates NADP(+). S142 provides a ligand contact to substrate. Y156 functions as the Proton acceptor in the catalytic mechanism.

It belongs to the short-chain dehydrogenases/reductases (SDR) family.

This is an uncharacterized protein from Escherichia coli (strain K12).